Consider the following 178-residue polypeptide: Large ribosomal subunit protein bL35m (178 aa).

Belongs to the bacterial ribosomal protein bL35 family.

The protein localises to the mitochondrion. The sequence is that of Large ribosomal subunit protein bL35m (mRpL35) from Drosophila melanogaster (Fruit fly).